Here is a 330-residue protein sequence, read N- to C-terminus: Small ribosomal subunit protein uS2 (330 aa).

It belongs to the universal ribosomal protein uS2 family.

The polypeptide is Small ribosomal subunit protein uS2 (Bradyrhizobium sp. (strain BTAi1 / ATCC BAA-1182)).